The primary structure comprises 668 residues: WD repeat-containing protein 48 homolog (668 aa).

WD repeat units follow at residues 26-65 (QHRN…SEKY), 71-110 (HHND…CMST), 113-152 (THRD…ALTA), 164-203 (GSKD…RRMK), 206-245 (GHTE…CVQT), 248-287 (VHKE…NKTL), 290-329 (EEQA…RCTL), and 350-389 (KGGA…KKEQ). The tract at residues 592 to 616 (ETTPSGGNANNSLQNSQSDANSEGS) is disordered.

The protein belongs to the WD repeat WDR48 family. As to quaternary structure, catalytic component of the Usp12-46 deubiquitylase complex consisting of Usp12-46, Wdr20 and Uaf1; regulatory subunit that, together wtih Wdr20, stabilizes Usp12-46. The Usp12-46 deubiquitylase complex associates with arr/arrow; the interaction leads to deubiquitination and stabilization of arr/arrow.

In terms of biological role, regulatory component of the Usp12-46 deubiquitylase complex. activates deubiquitination by increasing the catalytic turnover without increasing the affinity of deubiquitinating enzymes for the substrate. The complex deubiquitylates the wg/wingless-signaling receptor arr/arrow, which stabilizes the receptor and increases its concentration at the cell surface; this enhances the sensitivity of cells to wg/wingless-signal stimulation. This increases the amplitude and spatial range of the signaling response to the wg/wingless morphogen gradient, facilitating the precise concentration-dependent regulation of its target genes. Together with Wdr20 and Usp12-46 required for wg/wingless-mediated signaling in the wing imaginal disc and for wg/wingless-dependent regulation of intestinal stem cell proliferation. This Drosophila melanogaster (Fruit fly) protein is WD repeat-containing protein 48 homolog.